Here is a 190-residue protein sequence, read N- to C-terminus: Ribose 1,5-bisphosphate phosphokinase PhnN (190 aa).

The disordered stretch occupies residues 135–159 (RGREPEPGIGQRLARPDPAPGHQAD).

Belongs to the ribose 1,5-bisphosphokinase family.

It carries out the reaction alpha-D-ribose 1,5-bisphosphate + ATP = 5-phospho-alpha-D-ribose 1-diphosphate + ADP. It functions in the pathway metabolic intermediate biosynthesis; 5-phospho-alpha-D-ribose 1-diphosphate biosynthesis; 5-phospho-alpha-D-ribose 1-diphosphate from D-ribose 5-phosphate (route II): step 3/3. Functionally, catalyzes the phosphorylation of ribose 1,5-bisphosphate to 5-phospho-D-ribosyl alpha-1-diphosphate (PRPP). The chain is Ribose 1,5-bisphosphate phosphokinase PhnN from Pseudofrankia inefficax (strain DSM 45817 / CECT 9037 / DDB 130130 / EuI1c) (Frankia inefficax).